We begin with the raw amino-acid sequence, 759 residues long: MAKTKGLPKDTAVTPSPHLRPHTADLNRLLAGEHHDPHSILGAHEYDDHTVIRAYRPHATEVAAVVGGERHVFTHLEAGVFAVTLPFTGLIDYRLEVGYDHGGDQPHIHHTADAYRFLPTLGEMDLHLFSEGRHERLWEVLGAHPRTFETPDGVVEGVSFAVWAPNANGVQLIGDFNHWDGNEAQLRVLGSTGVWELFWPDFPVDGLYKFRIHGADGVVSERADPMAFATEVPPQTASRVTTSSYTWNDDAWMTQRAAQNPVFEPMSTLEVHLMSWRPGLSYVELADQLTEYVVEHGFTHVEMLPVAEHPFGGSWGYQVTSYYAPTSRLGTPDEFRYLVDRLHQAGIGVIVDWVPAHFPKDAWALGRFDGTALYEHADPRRGEQLDWGTYVFDFGRAEVRNFLVANALYWLQEFHVDGLRVDAVASMLYLDYSRPEGGWTPNIYGGRENLEAVQFLQEMNATVHKASPGIVTIAEESTSWPGVTRPTNLGGLGFSMKWNMGWMNDTLAFISRDPIHRSYHHHEMTFSMLYAFSENYVLPISHDEVVHGKGTLWGRMPGDDHRKAAGVRQLLAYQWAHPGKQLLFQGQEFGQRAEWSEERGVDWYQLDENSYSGGILRMISDMNGIYTSHRALWSHDTSPEGYSWIDANDSTNNVLSFLRYGDDGSVLACVFNFSGSEHSHYRLGLPHAGTWREVLNTDAADYNGAGIGNYGAVQATDEPWHGRPASAVMVLPPLSALWFEPVAAEAPVVQEPPTAPPLS.

Positions 1 to 21 (MAKTKGLPKDTAVTPSPHLRP) are disordered. Residue Asp422 is the Nucleophile of the active site. The active-site Proton donor is Glu475.

This sequence belongs to the glycosyl hydrolase 13 family. GlgB subfamily. Monomer.

It catalyses the reaction Transfers a segment of a (1-&gt;4)-alpha-D-glucan chain to a primary hydroxy group in a similar glucan chain.. It functions in the pathway glycan biosynthesis; glycogen biosynthesis. Catalyzes the formation of the alpha-1,6-glucosidic linkages in glycogen by scission of a 1,4-alpha-linked oligosaccharide from growing alpha-1,4-glucan chains and the subsequent attachment of the oligosaccharide to the alpha-1,6 position. The polypeptide is 1,4-alpha-glucan branching enzyme GlgB (Mycobacterium sp. (strain JLS)).